Reading from the N-terminus, the 362-residue chain is 3-isopropylmalate dehydrogenase (362 aa).

Substrate is bound by residues R97, R107, R135, and D225. 3 residues coordinate Mg(2+): D225, D249, and D253. 283 to 295 (GSAPDIAHKNLAN) is an NAD(+) binding site.

The protein belongs to the isocitrate and isopropylmalate dehydrogenases family. LeuB type 1 subfamily. Homodimer. Requires Mg(2+) as cofactor. Mn(2+) is required as a cofactor.

It localises to the cytoplasm. The enzyme catalyses (2R,3S)-3-isopropylmalate + NAD(+) = 4-methyl-2-oxopentanoate + CO2 + NADH. It participates in amino-acid biosynthesis; L-leucine biosynthesis; L-leucine from 3-methyl-2-oxobutanoate: step 3/4. Catalyzes the oxidation of 3-carboxy-2-hydroxy-4-methylpentanoate (3-isopropylmalate) to 3-carboxy-4-methyl-2-oxopentanoate. The product decarboxylates to 4-methyl-2 oxopentanoate. In Prochlorococcus marinus (strain SARG / CCMP1375 / SS120), this protein is 3-isopropylmalate dehydrogenase.